Reading from the N-terminus, the 345-residue chain is Membrane progestin receptor gamma-A (345 aa).

Over 1 to 52 the chain is Cytoplasmic; that stretch reads MLNLIKLPQVFTINQVPKVFHEDGIISGYRHPCSSAKDCVLSLFQLTNETLN. The chain crosses the membrane as a helical span at residues 53–73; it reads IWTHFLPTWFFLWKLLTVVLV. Residues 74 to 80 lie on the Extracellular side of the membrane; sequence LEDWRDP. A helical membrane pass occupies residues 81–101; the sequence is FIWPFLVFLLSCCVYPLASSC. Topologically, residues 102-114 are cytoplasmic; sequence AHTFSTMSERARH. Residues 115-135 form a helical membrane-spanning segment; it reads ICFFFDYGALSFYSLGSAIIY. Over 136–148 the chain is Extracellular; sequence SSYSFPDKWVNGT. A helical membrane pass occupies residues 149-169; sequence FHLNYVSIAVVNSIISTALAC. Residues 170–201 are Cytoplasmic-facing; that stretch reads YSRLGLPFLEYNCHSIKRPSGKLDQKLCKCLR. The chain crosses the membrane as a helical span at residues 202 to 222; that stretch reads IIAFVYPYLFDNIPLFYRIFV. Residues 223-272 lie on the Extracellular side of the membrane; the sequence is CAGEGCTVNEANTVHYQHTSLAFFTGFLFATHLPERLAPGSFDYIGHSHQ. A helical transmembrane segment spans residues 273 to 293; the sequence is LFHVFAIIGTYFQMTAIELDM. Over 294–314 the chain is Cytoplasmic; it reads AARKQWLHAHLPPVTFLNTVG. A helical transmembrane segment spans residues 315–335; the sequence is AAFFSVVSGLCIVYVFSLSLF. At 336–345 the chain is on the extracellular side; it reads STRGVKNKSF.

The protein belongs to the ADIPOR family.

It is found in the membrane. In terms of biological role, steroid membrane receptor. Binds progesterone. May be involved in oocyte maturation. The polypeptide is Membrane progestin receptor gamma-A (paqr5a) (Danio rerio (Zebrafish)).